The sequence spans 415 residues: ORC1-type DNA replication protein 2 (415 aa).

ATP contacts are provided by residues Thr69–Val73, Tyr215, and Arg227.

It belongs to the CDC6/cdc18 family.

In terms of biological role, involved in regulation of DNA replication. The protein is ORC1-type DNA replication protein 2 (cdc6-2) of Sulfolobus acidocaldarius (strain ATCC 33909 / DSM 639 / JCM 8929 / NBRC 15157 / NCIMB 11770).